The sequence spans 514 residues: Alanine--glyoxylate aminotransferase 2, mitochondrial (514 aa).

The transit peptide at 1–41 (MTLIWRHLLRPLCLVTPAPRILEMRPFLNLGASWTSVTKLS) directs the protein to the mitochondrion. N6-acetyllysine; alternate is present on lysine 71. Lysine 71 is subject to N6-succinyllysine; alternate. Lysine 84 is subject to N6-acetyllysine. Residue lysine 262 is modified to N6-acetyllysine; alternate. Lysine 262 carries the N6-succinyllysine; alternate modification. Position 304 is an N6-succinyllysine (lysine 304). At lysine 350 the chain carries N6-(pyridoxal phosphate)lysine. An N6-acetyllysine; alternate modification is found at lysine 420. Lysine 420 carries the N6-succinyllysine; alternate modification.

Belongs to the class-III pyridoxal-phosphate-dependent aminotransferase family. As to quaternary structure, homotetramer. Pyridoxal 5'-phosphate is required as a cofactor.

Its subcellular location is the mitochondrion. It carries out the reaction glyoxylate + L-alanine = glycine + pyruvate. The catalysed reaction is (R)-3-amino-2-methylpropanoate + pyruvate = 2-methyl-3-oxopropanoate + L-alanine. The enzyme catalyses 3-oxopropanoate + L-alanine = beta-alanine + pyruvate. It catalyses the reaction 2-oxobutanoate + L-alanine = (2S)-2-aminobutanoate + pyruvate. It carries out the reaction N(omega),N(omega)-dimethyl-L-arginine + pyruvate = 5-(3,3-dimethylguanidino)-2-oxopentanoate + L-alanine. The catalysed reaction is N(omega),N('omega)-dimethyl-L-arginine + pyruvate = 5-(3,3'-dimethylguanidino)-2-oxopentanoate + L-alanine. The enzyme catalyses N(omega),N(omega)-dimethyl-L-arginine + glyoxylate = 5-(3,3-dimethylguanidino)-2-oxopentanoate + glycine. It catalyses the reaction N(omega),N('omega)-dimethyl-L-arginine + glyoxylate = 5-(3,3'-dimethylguanidino)-2-oxopentanoate + glycine. It carries out the reaction N(omega)-methyl-L-arginine + pyruvate = 5-(3-methylguanidino)-2-oxopentanoate + L-alanine. The catalysed reaction is N(omega)-methyl-L-arginine + glyoxylate = 5-(3-methylguanidino)-2-oxopentanoate + glycine. The enzyme catalyses L-ornithine + pyruvate = 5-amino-2-oxopentanoate + L-alanine. It catalyses the reaction L-ornithine + glyoxylate = 5-amino-2-oxopentanoate + glycine. It carries out the reaction (2S)-2-aminobutanoate + glyoxylate = 2-oxobutanoate + glycine. The catalysed reaction is N(omega),N(omega)-dimethyl-L-arginine + oxaloacetate = 5-(3,3-dimethylguanidino)-2-oxopentanoate + L-aspartate. The enzyme catalyses oxaloacetate + L-alanine = L-aspartate + pyruvate. It catalyses the reaction N(omega),N(omega)-dimethyl-L-arginine + 2-oxobutanoate = 5-(3,3-dimethylguanidino)-2-oxopentanoate + (2S)-2-aminobutanoate. It carries out the reaction 2-oxopentanoate + N(omega),N(omega)-dimethyl-L-arginine = 5-(3,3-dimethylguanidino)-2-oxopentanoate + L-2-aminopentanoate. The catalysed reaction is 2-oxohexanoate + N(omega),N(omega)-dimethyl-L-arginine = L-2-aminohexanoate + 5-(3,3-dimethylguanidino)-2-oxopentanoate. Functionally, multifunctional aminotransferase with a broad substrate specificity. Catalyzes the conversion of glyoxylate to glycine using alanine as the amino donor. Catalyzes metabolism of not L- but the D-isomer of D-beta-aminoisobutyric acid to generate 2-methyl-3-oxopropanoate and alanine. Catalyzes the transfer of the amino group from beta-alanine to pyruvate to yield L-alanine and 3-oxopropanoate. Can metabolize NG-monomethyl-L-arginine (NMMA), asymmetric NG,NG-dimethyl-L-arginine (ADMA) and symmetric NG,N'G-dimethyl-L-arginine (SDMA). ADMA is a potent inhibitor of nitric-oxide (NO) synthase, and this activity provides mechanism through which the kidney regulates blood pressure. This chain is Alanine--glyoxylate aminotransferase 2, mitochondrial (AGXT2), found in Pongo abelii (Sumatran orangutan).